The following is a 665-amino-acid chain: Dual specificity protein phosphatase 16 (665 aa).

In terms of domain architecture, Rhodanese spans 22–137 (GTEKVLLIDS…FSRCFPGLCE (116 aa)). A (Microbial infection) N6-acetyllysine; by EIS modification is found at lysine 55. Residues 158–300 (GPTRILPNLY…LLDYEKKIKN (143 aa)) form the Tyrosine-protein phosphatase domain. The active-site Phosphocysteine intermediate is the cysteine 244. Residues 321–368 (EPVPAVSEGGQKSETPLSPPCADSATSEAAGQRPVHPASVPSVPSVQP) form a disordered region. Over residues 354–368 (PVHPASVPSVPSVQP) the composition is skewed to low complexity. Residue serine 446 is modified to Phosphoserine; by MAPK1. Composition is skewed to polar residues over residues 449–458 (QELSEQTPET) and 487–499 (VRTS…QRSL). Disordered stretches follow at residues 449–505 (QELS…PLHR) and 597–665 (VRRR…IEVS). Serine 501 carries the phosphoserine modification. Residues 602–622 (KPSDRADSRRSWHEESPFEKQ) show a composition bias toward basic and acidic residues.

This sequence belongs to the protein-tyrosine phosphatase family. Non-receptor class dual specificity subfamily. As to quaternary structure, interacts with ARRB2. Phosphorylated at Ser-446 by MAPK1/ERK2, which prevents its degradation, and thereby stabilizes it and blocks JNK MAPK activity. In terms of processing, (Microbial infection) Acetylated at Lys-55 by the M.tuberculosis Eis protein; this leads to the inhibition of JNK-dependent autophagy, phagosome maturation, and ROS (reactive oxygen species) generation for enhanced intracellular survival of M.tuberculosis.

It is found in the cytoplasm. The protein resides in the nucleus. Its subcellular location is the cytoplasmic vesicle. It catalyses the reaction O-phospho-L-tyrosyl-[protein] + H2O = L-tyrosyl-[protein] + phosphate. The catalysed reaction is O-phospho-L-seryl-[protein] + H2O = L-seryl-[protein] + phosphate. The enzyme catalyses O-phospho-L-threonyl-[protein] + H2O = L-threonyl-[protein] + phosphate. Its function is as follows. Dual specificity protein phosphatase involved in the inactivation of MAP kinases. Dephosphorylates MAPK10 bound to ARRB2. The protein is Dual specificity protein phosphatase 16 (DUSP16) of Homo sapiens (Human).